Reading from the N-terminus, the 133-residue chain is MLPAQNKLTSSVQFRTTMRKGRRAGSSTVVVHLWDSAESLDGTGEKGEVASFGGPRFGLIVSKAVGNAVIRHRTSRRLRHVCARIAADSPELLTPTHHVVIRALAGSGQASSQDLERDIRHGLRKAGRVRTDK.

Belongs to the RnpA family. As to quaternary structure, consists of a catalytic RNA component (M1 or rnpB) and a protein subunit.

It catalyses the reaction Endonucleolytic cleavage of RNA, removing 5'-extranucleotides from tRNA precursor.. In terms of biological role, RNaseP catalyzes the removal of the 5'-leader sequence from pre-tRNA to produce the mature 5'-terminus. It can also cleave other RNA substrates such as 4.5S RNA. The protein component plays an auxiliary but essential role in vivo by binding to the 5'-leader sequence and broadening the substrate specificity of the ribozyme. This chain is Ribonuclease P protein component, found in Corynebacterium efficiens (strain DSM 44549 / YS-314 / AJ 12310 / JCM 11189 / NBRC 100395).